We begin with the raw amino-acid sequence, 446 residues long: Glutamate-1-semialdehyde 2,1-aminomutase (446 aa).

K263 carries the N6-(pyridoxal phosphate)lysine modification.

The protein belongs to the class-III pyridoxal-phosphate-dependent aminotransferase family. HemL subfamily. Pyridoxal 5'-phosphate is required as a cofactor.

The protein localises to the cytoplasm. The catalysed reaction is (S)-4-amino-5-oxopentanoate = 5-aminolevulinate. Its pathway is porphyrin-containing compound metabolism; protoporphyrin-IX biosynthesis; 5-aminolevulinate from L-glutamyl-tRNA(Glu): step 2/2. This chain is Glutamate-1-semialdehyde 2,1-aminomutase, found in Haloquadratum walsbyi (strain DSM 16790 / HBSQ001).